Reading from the N-terminus, the 79-residue chain is Large ribosomal subunit protein bL28 (79 aa).

Belongs to the bacterial ribosomal protein bL28 family.

The protein is Large ribosomal subunit protein bL28 of Blochmanniella floridana.